A 361-amino-acid chain; its full sequence is uncharacterized protein (361 aa).

33-40 (GPINSGKT) provides a ligand contact to ATP.

Belongs to the archaeal ATPase family.

This is an uncharacterized protein from Methanocaldococcus jannaschii (strain ATCC 43067 / DSM 2661 / JAL-1 / JCM 10045 / NBRC 100440) (Methanococcus jannaschii).